We begin with the raw amino-acid sequence, 425 residues long: Ribulose bisphosphate carboxylase/oxygenase activase B, chloroplastic (425 aa).

The N-terminal 43 residues, 1-43, are a transit peptide targeting the chloroplast; that stretch reads MASAFSSTVGAPASTPTIFLGKKVKNYYHGGNKMKSRVVRVMA. Residue 153–160 participates in ATP binding; that stretch reads GGKGQGKS.

This sequence belongs to the RuBisCO activase family.

It is found in the plastid. It localises to the chloroplast stroma. In terms of biological role, activation of RuBisCO (ribulose-1,5-bisphosphate carboxylase/oxygenase; EC 4.1.1.39) involves the ATP-dependent carboxylation of the epsilon-amino group of lysine leading to a carbamate structure. In Hordeum vulgare (Barley), this protein is Ribulose bisphosphate carboxylase/oxygenase activase B, chloroplastic (RCAB).